We begin with the raw amino-acid sequence, 629 residues long: tRNA uridine 5-carboxymethylaminomethyl modification enzyme MnmG (629 aa).

FAD contacts are provided by residues 14–19 (GAGHAG), Val126, and Ser181. An NAD(+)-binding site is contributed by 273–287 (GPRYCPSIEDKVVRF). Residue Gln370 participates in FAD binding.

The protein belongs to the MnmG family. Homodimer. Heterotetramer of two MnmE and two MnmG subunits. Requires FAD as cofactor.

The protein resides in the cytoplasm. In terms of biological role, NAD-binding protein involved in the addition of a carboxymethylaminomethyl (cmnm) group at the wobble position (U34) of certain tRNAs, forming tRNA-cmnm(5)s(2)U34. This is tRNA uridine 5-carboxymethylaminomethyl modification enzyme MnmG from Geobacillus thermodenitrificans (strain NG80-2).